Here is a 222-residue protein sequence, read N- to C-terminus: Cyclin-U2-1 (222 aa).

It belongs to the cyclin family. Cyclin U/P subfamily. Interacts with CDKA-1. Expressed in roots, stems and flowers. Expressed in the shoot apex, leaf primordia and young leaves.

This Arabidopsis thaliana (Mouse-ear cress) protein is Cyclin-U2-1 (CYCU2-1).